Reading from the N-terminus, the 395-residue chain is S-adenosylmethionine synthase 5 (395 aa).

A Mg(2+)-binding site is contributed by Glu10. His16 is an ATP binding site. Residue Glu44 coordinates K(+). Residues Glu57 and Gln100 each coordinate L-methionine. Residues 168–170 (DGK), 236–239 (SGRF), Asp247, 253–254 (RK), Ala270, Lys274, and Lys278 contribute to the ATP site. L-methionine is bound at residue Asp247. Residue Lys278 participates in L-methionine binding.

It belongs to the AdoMet synthase family. As to quaternary structure, homotetramer. Mn(2+) serves as cofactor. Mg(2+) is required as a cofactor. Requires Co(2+) as cofactor. It depends on K(+) as a cofactor.

It is found in the cytoplasm. It carries out the reaction L-methionine + ATP + H2O = S-adenosyl-L-methionine + phosphate + diphosphate. The protein operates within amino-acid biosynthesis; S-adenosyl-L-methionine biosynthesis; S-adenosyl-L-methionine from L-methionine: step 1/1. Its function is as follows. Catalyzes the formation of S-adenosylmethionine from methionine and ATP. The reaction comprises two steps that are both catalyzed by the same enzyme: formation of S-adenosylmethionine (AdoMet) and triphosphate, and subsequent hydrolysis of the triphosphate. The polypeptide is S-adenosylmethionine synthase 5 (METK5) (Populus trichocarpa (Western balsam poplar)).